The chain runs to 948 residues: Protein translocase subunit SecA (948 aa).

ATP contacts are provided by residues Gln-90, 108 to 112, and Asp-509; that span reads GEGKT.

It belongs to the SecA family. In terms of assembly, monomer and homodimer. Part of the essential Sec protein translocation apparatus which comprises SecA, SecYEG and auxiliary proteins SecDF. Other proteins may also be involved.

Its subcellular location is the cell inner membrane. The protein resides in the cellular thylakoid membrane. It is found in the cytoplasm. It catalyses the reaction ATP + H2O + cellular proteinSide 1 = ADP + phosphate + cellular proteinSide 2.. Its function is as follows. Part of the Sec protein translocase complex. Interacts with the SecYEG preprotein conducting channel. Has a central role in coupling the hydrolysis of ATP to the transfer of proteins into and across the cell membrane, serving as an ATP-driven molecular motor driving the stepwise translocation of polypeptide chains across the membrane. Functionally, probably participates in protein translocation into and across both the cytoplasmic and thylakoid membranes in cyanobacterial cells. This chain is Protein translocase subunit SecA, found in Prochlorococcus marinus (strain MIT 9313).